We begin with the raw amino-acid sequence, 408 residues long: DNA primase DnaG (408 aa).

Positions 165–243 (PELIIVEGRA…KIDYVARAPT (79 aa)) constitute a Toprim domain. Residues Glu-171, Asp-216, and Asp-218 each coordinate Mg(2+).

It belongs to the archaeal DnaG primase family. In terms of assembly, forms a ternary complex with MCM helicase and DNA. Component of the archaeal exosome complex. Mg(2+) serves as cofactor.

The catalysed reaction is ssDNA + n NTP = ssDNA/pppN(pN)n-1 hybrid + (n-1) diphosphate.. In terms of biological role, RNA polymerase that catalyzes the synthesis of short RNA molecules used as primers for DNA polymerase during DNA replication. Also part of the exosome, which is a complex involved in RNA degradation. Acts as a poly(A)-binding protein that enhances the interaction between heteromeric, adenine-rich transcripts and the exosome. The sequence is that of DNA primase DnaG from Sulfurisphaera tokodaii (strain DSM 16993 / JCM 10545 / NBRC 100140 / 7) (Sulfolobus tokodaii).